The chain runs to 155 residues: Small ribosomal subunit protein uS7cz/uS7cy (155 aa).

This sequence belongs to the universal ribosomal protein uS7 family. In terms of assembly, part of the 30S ribosomal subunit.

It localises to the plastid. The protein resides in the chloroplast. One of the primary rRNA binding proteins, it binds directly to 16S rRNA where it nucleates assembly of the head domain of the 30S subunit. This Ceratophyllum demersum (Rigid hornwort) protein is Small ribosomal subunit protein uS7cz/uS7cy (rps7-A).